A 156-amino-acid chain; its full sequence is ATP synthase subunit b (156 aa).

The chain crosses the membrane as a helical span at residues 11–31 (AIAFVLFVLFCMKYVWPPIMA).

Belongs to the ATPase B chain family. As to quaternary structure, F-type ATPases have 2 components, F(1) - the catalytic core - and F(0) - the membrane proton channel. F(1) has five subunits: alpha(3), beta(3), gamma(1), delta(1), epsilon(1). F(0) has three main subunits: a(1), b(2) and c(10-14). The alpha and beta chains form an alternating ring which encloses part of the gamma chain. F(1) is attached to F(0) by a central stalk formed by the gamma and epsilon chains, while a peripheral stalk is formed by the delta and b chains.

It is found in the cell inner membrane. F(1)F(0) ATP synthase produces ATP from ADP in the presence of a proton or sodium gradient. F-type ATPases consist of two structural domains, F(1) containing the extramembraneous catalytic core and F(0) containing the membrane proton channel, linked together by a central stalk and a peripheral stalk. During catalysis, ATP synthesis in the catalytic domain of F(1) is coupled via a rotary mechanism of the central stalk subunits to proton translocation. In terms of biological role, component of the F(0) channel, it forms part of the peripheral stalk, linking F(1) to F(0). The chain is ATP synthase subunit b from Cronobacter sakazakii (strain ATCC BAA-894) (Enterobacter sakazakii).